We begin with the raw amino-acid sequence, 419 residues long: MAGFGAMEKFLVEYKSAVEKKLAEYKCNTNTAIELKLVRFPEDLENDIRTFFPEYTHQLFGDDETAFGYKGLKILLYYIAGSLSTMFRVEYASKVDENFDCVEADDVEGKIRQIIPPGFCTNTNDFLSLLEKEVDFKPFGTLLHTYSVLSPTGGENFTFQIYKADMTCRGFREYHERLQTFLMWFIETASFIDVDDERWHYFLVFEKYNKDGATLFATVGYMTVYNYYVYPDKTRPRVSQMLILTPFQGQGHGAQLLETVHRYYTEFPTVLDITAEDPSKSYVKLRDFVLVKLCQDLPCFSREKLMQGFNEDMVIEAQQKFKINKQHARRVYEILRLLVTDMSDAEQYRSYRLDIKRRLISPYKKKQRDLAKMRKCLRPEELTNQMNQIEISMQHEQLEESFQELVEDYRRVIERLAQE.

Position 2 is an N-acetylalanine (A2). N6-acetyllysine occurs at positions 9 and 15. The interval 62-64 is interaction with histone H4 N-terminus; sequence DDE. S190 is subject to Phosphoserine; by AMPK. The interval 225–227 is interaction with histone H4 N-terminus; that stretch reads YNY. Acetyl-CoA contacts are provided by residues 241–243 and 248–254; these read MLI and QGQGHGA. E276 functions as the Proton donor/acceptor in the catalytic mechanism. S343 is subject to Phosphoserine.

The protein belongs to the HAT1 family. Catalytic subunit of the type B histone acetyltransferase (HAT) complex, composed of RBBP7 and HAT1. Interacts with histones H4 and H2A. The interaction is dependent of the ability of RBBP7 to bind to the N-terminus of histones. Component of the histone H3.1 and H3.3 complexes. In terms of processing, phosphorylated by AMPK at Ser-190; phosphorylation increases HAT1 activity.

It is found in the nucleus matrix. The protein resides in the mitochondrion. It localises to the cytoplasm. The protein localises to the nucleus. Its subcellular location is the nucleoplasm. It catalyses the reaction L-lysyl-[protein] + acetyl-CoA = N(6)-acetyl-L-lysyl-[protein] + CoA + H(+). Functionally, histone acetyltransferase that plays a role in different biological processes including cell cycle progression, glucose metabolism, histone production or DNA damage repair. Coordinates histone production and acetylation via H4 promoter binding. Acetylates histone H4 at 'Lys-5' (H4K5ac) and 'Lys-12' (H4K12ac) and, to a lesser extent, histone H2A at 'Lys-5' (H2AK5ac). Drives H4 production by chromatin binding to support chromatin replication and acetylation. Since transcription of H4 genes is tightly coupled to S-phase, plays an important role in S-phase entry and progression. Promotes homologous recombination in DNA repair by facilitating histone turnover and incorporation of acetylated H3.3 at sites of double-strand breaks. In addition, acetylates other substrates such as chromatin-related proteins. Also acetylates RSAD2 which mediates the interaction of ubiquitin ligase UBE4A with RSAD2 leading to RSAD2 ubiquitination and subsequent degradation. (Microbial infection) Contributes to hepatitis B virus (HBV) replication by acetylating histone H4 at the sites of 'Lys-5' and 'Lys-12' on the covalently closed circular DNA (cccDNA) minichromosome leading to its accumulation within the host cell. The sequence is that of Histone acetyltransferase type B catalytic subunit (HAT1) from Homo sapiens (Human).